The following is a 64-amino-acid chain: Cytochrome b-c1 complex subunit 9 (64 aa).

At 2–21 the chain is on the mitochondrial matrix side; sequence VAPTLTARLYSLLFRRTSTF. A helical membrane pass occupies residues 22–47; the sequence is ALTIVVGALFFERAFDQGADAIYEHI. Topologically, residues 48 to 64 are mitochondrial intermembrane; it reads NEGKLWKHIKHKYENKE.

The protein belongs to the UQCR10/QCR9 family. As to quaternary structure, component of the ubiquinol-cytochrome c oxidoreductase (cytochrome b-c1 complex, complex III, CIII), a multisubunit enzyme composed of 11 subunits. The complex is composed of 3 respiratory subunits cytochrome b, cytochrome c1 and Rieske protein UQCRFS1, 2 core protein subunits UQCRC1/QCR1 and UQCRC2/QCR2, and 6 low-molecular weight protein subunits UQCRH/QCR6, UQCRB/QCR7, UQCRQ/QCR8, UQCR10/QCR9, UQCR11/QCR10 and subunit 9, the cleavage product of Rieske protein UQCRFS1. The complex exists as an obligatory dimer and forms supercomplexes (SCs) in the inner mitochondrial membrane with NADH-ubiquinone oxidoreductase (complex I, CI) and cytochrome c oxidase (complex IV, CIV), resulting in different assemblies (supercomplex SCI(1)III(2)IV(1) and megacomplex MCI(2)III(2)IV(2)). Interacts with STMP1.

The protein resides in the mitochondrion inner membrane. In terms of biological role, component of the ubiquinol-cytochrome c oxidoreductase, a multisubunit transmembrane complex that is part of the mitochondrial electron transport chain which drives oxidative phosphorylation. The respiratory chain contains 3 multisubunit complexes succinate dehydrogenase (complex II, CII), ubiquinol-cytochrome c oxidoreductase (cytochrome b-c1 complex, complex III, CIII) and cytochrome c oxidase (complex IV, CIV), that cooperate to transfer electrons derived from NADH and succinate to molecular oxygen, creating an electrochemical gradient over the inner membrane that drives transmembrane transport and the ATP synthase. The cytochrome b-c1 complex catalyzes electron transfer from ubiquinol to cytochrome c, linking this redox reaction to translocation of protons across the mitochondrial inner membrane, with protons being carried across the membrane as hydrogens on the quinol. In the process called Q cycle, 2 protons are consumed from the matrix, 4 protons are released into the intermembrane space and 2 electrons are passed to cytochrome c. This is Cytochrome b-c1 complex subunit 9 (UQCR10) from Bos taurus (Bovine).